The primary structure comprises 156 residues: MPRRRVIGQRKILPDPKFGSELLAKFVNILMVDGKKSTAESIAYSALETLAQRSGKSELEAFEVALENVRPTVEVKSRRVGGSTYQVPVEVRPVRRNALAMRWIVEAARKRGDKSMALRLANELSDAADNKGTAVKKREDVHRMAEANKAFAHYRW.

Belongs to the universal ribosomal protein uS7 family. Part of the 30S ribosomal subunit. Contacts proteins S9 and S11.

Its function is as follows. One of the primary rRNA binding proteins, it binds directly to 16S rRNA where it nucleates assembly of the head domain of the 30S subunit. Is located at the subunit interface close to the decoding center, probably blocks exit of the E-site tRNA. In Salmonella choleraesuis (strain SC-B67), this protein is Small ribosomal subunit protein uS7.